We begin with the raw amino-acid sequence, 592 residues long: BRCA1-associated protein (592 aa).

Serine 52 is subject to Phosphoserine. Residues 78 to 124 (KSNPDELKTTVEERKSSEASPTAQRSKDHSKECINAAPDSPSKQLPD) are disordered. Residues 80–94 (NPDELKTTVEERKSS) are compositionally biased toward basic and acidic residues. A phosphoserine mark is found at serine 97, serine 117, and serine 119. Residues 264–304 (CTVCLERMDESVNGILTTLCNHSFHSQCLQRWDDTTCPVCR) form an RING-type zinc finger. The segment at 301–393 (PVCRYCQTPE…GKIVQYECEG (93 aa)) adopts a UBP-type; degenerate zinc-finger fold. Zn(2+) is bound by residues cysteine 317, cysteine 320, cysteine 329, cysteine 332, cysteine 337, histidine 344, histidine 348, and histidine 354. A coiled-coil region spans residues 429 to 537 (RIEKDTAEEI…EIQEQLRDVM (109 aa)). A disordered region spans residues 565–592 (AMASASSPASSGGSGKLPSRKGRSKRGK). Residues 582 to 592 (PSRKGRSKRGK) show a composition bias toward basic residues.

Interacts with the nuclear localization signal of BRCA1 and with the N-terminal of KSR1. The C-terminal portion of BCRA1 interacts with DDB1. As to expression, expressed in breast epithelial cell lines.

Its subcellular location is the cytoplasm. The catalysed reaction is S-ubiquitinyl-[E2 ubiquitin-conjugating enzyme]-L-cysteine + [acceptor protein]-L-lysine = [E2 ubiquitin-conjugating enzyme]-L-cysteine + N(6)-ubiquitinyl-[acceptor protein]-L-lysine.. It functions in the pathway protein modification; protein ubiquitination. Its function is as follows. Negatively regulates MAP kinase activation by limiting the formation of Raf/MEK complexes probably by inactivation of the KSR1 scaffold protein. Also acts as a Ras responsive E3 ubiquitin ligase that, on activation of Ras, is modified by auto-polyubiquitination resulting in the release of inhibition of Raf/MEK complex formation. May also act as a cytoplasmic retention protein with a role in regulating nuclear transport. The chain is BRCA1-associated protein from Homo sapiens (Human).